The sequence spans 303 residues: MNIKNEKIAVLYGGTSQEREVSLHSGAAVTEALKSLGYNVEGIDTKDIAIEKLKEKGIQRVFNILHGGIGENGVLQGALEQMGIPYTGCGVMASAITLDKFRTKLLWNAVGLPTADMVVVQRGQAIDINQIIAKLSLPVFVKPSSEGSSVGVFKVKTKEELLPAITAALEFDTIVLVEEFLTGAEYSVPVLDGEVLPAVQIIPDGEFYDYHAKYLSDKTQYIVPALTNERQAEVAKIVKAAYDVVGCRGWSRIDVMEDQNQNFRLVEVNTNPGMTSHSIFPKSAATMGISFEKLVERVLELSI.

Positions 104–300 (KLLWNAVGLP…FEKLVERVLE (197 aa)) constitute an ATP-grasp domain. Position 132–187 (132–187 (IAKLSLPVFVKPSSEGSSVGVFKVKTKEELLPAITAALEFDTIVLVEEFLTGAEYS)) interacts with ATP. 3 residues coordinate Mg(2+): Asp254, Glu267, and Asn269.

The protein belongs to the D-alanine--D-alanine ligase family. Requires Mg(2+) as cofactor. It depends on Mn(2+) as a cofactor.

The protein resides in the cytoplasm. It catalyses the reaction 2 D-alanine + ATP = D-alanyl-D-alanine + ADP + phosphate + H(+). Its pathway is cell wall biogenesis; peptidoglycan biosynthesis. Cell wall formation. The protein is D-alanine--D-alanine ligase of Haemophilus ducreyi (strain 35000HP / ATCC 700724).